We begin with the raw amino-acid sequence, 778 residues long: MIVTRSWLNEWIDISTISTDKLVKTLNSIGLEVDSISSYEVPQKIVFGRVLECKKHPDADKLNICQVDIGVSTRQIVCGASNVRAGLDVVVATIGAVMPDGTIIKPVTLRGIESEGMICSAKEIGLADINSGIIEIDSSIGKYKIGEEVSQNHLFSDDIIEVELTANRGDCLSIRGVARDLSAAFDKPLRERKIQEDEDKRVGIGRILSLSHENNLGVNIRYKAVDFKNLTLPFIVRLRLSQLDDKKESDVESLMLYATHSSGVILRAYDYALFCAKDETMAKISLCRDKNGFASVMTKDKKVSIVGVMQEELFKVAHSNGVVLIEATYIPPDVISKKMQENKIPAGISYYRASRGSEPDLNQGLDYCISVIEDNSESSVYGGTIEIDEPHEDKIISLNKKEIDEIVGANIDKAKITKILKNLGFDTTKSLADNFVIIVPKFRHDIVNKQDIVEEIVRLVGIDNIPSKPFTFTETNSFSSDYYDYKKRVTYRHKAAFSGFFESVHFVFDEKKVLQEYGFEILDESKELLNPIVNTLDTLRSTLLCGLLRATSNNINNGYSSVKLFEVGSVFNSQREESLKMALIFSGDREAESLANTGKPAKVDFALFVQKVSNVIGEFELREYKTKHTLSHPYQCAEIFIKEVSVGEIFRLHPNVEQKYDLDVTYMCELNFNKLPNDLKTAKQSSKYQASFRDLSIVMPQEMAYEKIKNVIDASSTKELVRFYVVDKYSDKSLGENMSLSIRFVLQSFDKTLEEEEITNAMNTILEALKNQLGVGIR.

Positions 39-150 (YEVPQKIVFG…GKYKIGEEVS (112 aa)) constitute a tRNA-binding domain. One can recognise a B5 domain in the interval 391 to 467 (HEDKIISLNK…RLVGIDNIPS (77 aa)). The Mg(2+) site is built by D445, D451, E454, and E455. The FDX-ACB domain occupies 686-778 (SKYQASFRDL…LKNQLGVGIR (93 aa)).

It belongs to the phenylalanyl-tRNA synthetase beta subunit family. Type 1 subfamily. As to quaternary structure, tetramer of two alpha and two beta subunits. Mg(2+) is required as a cofactor.

The protein resides in the cytoplasm. It carries out the reaction tRNA(Phe) + L-phenylalanine + ATP = L-phenylalanyl-tRNA(Phe) + AMP + diphosphate + H(+). The sequence is that of Phenylalanine--tRNA ligase beta subunit from Sulfurimonas denitrificans (strain ATCC 33889 / DSM 1251) (Thiomicrospira denitrificans (strain ATCC 33889 / DSM 1251)).